A 250-amino-acid chain; its full sequence is uncharacterized protein (250 aa).

A helical membrane pass occupies residues 4 to 24 (FKYLLFLVVFAVFFLTFAFFD).

Its subcellular location is the membrane. This is an uncharacterized protein from Methanocaldococcus jannaschii (strain ATCC 43067 / DSM 2661 / JAL-1 / JCM 10045 / NBRC 100440) (Methanococcus jannaschii).